Here is a 701-residue protein sequence, read N- to C-terminus: Sodium/hydrogen exchanger 6 (701 aa).

The next 2 membrane-spanning stretches (helical) occupy residues 71–91 (SANLLIFILLLTLTILTIWLF) and 103–123 (GLAMIYGLLVGLVLRYGIHVP). Residue asparagine 128 is glycosylated (N-linked (GlcNAc...) asparagine). Transmembrane regions (helical) follow at residues 176 to 196 (VTFDPEVFFNILLPPIIFYAG), 211 to 231 (ILAYAFLGTAISCFVIGSIMY), 252 to 272 (CLLFGAIVSATDPVTVLAIFH), 278 to 298 (VELYALLFGESVLNDAVAIVL), 324 to 344 (IGIFLGIFSGSFAMGAATGVV), 372 to 392 (TFLLAEAWGFTGVVAVLFCGI), 414 to 434 (FELLNFLAENFIFSYMGLTLF), and 436 to 456 (FQNHVFNPTFVVGAFVAIFLG). A Glycyl lysine isopeptide (Lys-Gly) (interchain with G-Cter in ubiquitin) cross-link involves residue lysine 475. Helical transmembrane passes span 479–499 (NFQHMMMFAGLRGAMAFALAI) and 515–535 (LLIVFFTVWVFGGGTTAMLSC).

The protein belongs to the monovalent cation:proton antiporter 1 (CPA1) transporter (TC 2.A.36) family. In terms of assembly, homodimer. Interacts with RACK1; regulates the distribution of SLC9A6 between endosomes and the plasma membrane. In terms of processing, ubiquitinated (in vitro). Glycosylated. As to expression, ubiquitous. High expression in brain, skeletal muscle, and heart, but is also detected at lower levels in most other tissues.

The protein resides in the endosome membrane. It localises to the recycling endosome membrane. The protein localises to the early endosome membrane. Its subcellular location is the late endosome membrane. It is found in the cell membrane. The enzyme catalyses Na(+)(in) + H(+)(out) = Na(+)(out) + H(+)(in). The catalysed reaction is K(+)(in) + H(+)(out) = K(+)(out) + H(+)(in). Its function is as follows. Endosomal Na(+), K(+)/H(+) antiporter. Mediates the electroneutral exchange of endosomal luminal H(+) for a cytosolic Na(+) or K(+). By facilitating proton efflux, SLC9A6 counteracts the acidity generated by vacuolar (V)-ATPase, thereby limiting luminal acidification. Responsible for alkalizing and maintaining the endosomal pH, and consequently in, e.g., endosome maturation and trafficking of recycling endosomal cargo. Plays a critical role during neurodevelopment by regulating synaptic development and plasticity. Implicated in the maintenance of cell polarity in a manner that is dependent on its ability to modulate intravesicular pH. Regulates intracelular pH in some specialized cells, osteoclasts and stereocilia where this transporter localizes to the plasma membrane. The protein is Sodium/hydrogen exchanger 6 of Homo sapiens (Human).